The sequence spans 230 residues: Ribonuclease 3 (230 aa).

Positions 19–134 (ELLTIALTHR…LLGAIYLEHG (116 aa)) constitute an RNase III domain. Glu-44 serves as a coordination point for Mg(2+). Asp-48 is an active-site residue. Mg(2+) contacts are provided by Asp-120 and Glu-123. One can recognise a DRBM domain in the interval 161-229 (DWKSSLQELT…AASAYKTLDE (69 aa)).

It belongs to the ribonuclease III family. Homodimer. Requires Mg(2+) as cofactor.

The protein resides in the cytoplasm. It catalyses the reaction Endonucleolytic cleavage to 5'-phosphomonoester.. In terms of biological role, digests double-stranded RNA. Involved in the processing of primary rRNA transcript to yield the immediate precursors to the all rRNAs (23S, 16S and 5S). Processes some mRNAs, and tRNAs when they are encoded in the rRNA operon. Processes pre-crRNA and tracrRNA of type II CRISPR loci if present in the organism. This Mycolicibacterium smegmatis (strain ATCC 700084 / mc(2)155) (Mycobacterium smegmatis) protein is Ribonuclease 3 (rnc).